The chain runs to 179 residues: Translation initiation factor IF-3 (179 aa).

This sequence belongs to the IF-3 family. As to quaternary structure, monomer.

The protein resides in the cytoplasm. IF-3 binds to the 30S ribosomal subunit and shifts the equilibrium between 70S ribosomes and their 50S and 30S subunits in favor of the free subunits, thus enhancing the availability of 30S subunits on which protein synthesis initiation begins. This is Translation initiation factor IF-3 from Lactococcus lactis subsp. lactis (strain IL1403) (Streptococcus lactis).